The primary structure comprises 144 residues: NADH-ubiquinone oxidoreductase chain 6 (144 aa).

5 helical membrane passes run 1–21, 26–46, 47–67, 76–96, and 108–128; these read MLGS…INVD, SFFL…FLHV, WFSY…LVYF, VVTP…YPFF, and FYFS…IFFM.

Belongs to the complex I subunit 6 family.

It is found in the mitochondrion membrane. It catalyses the reaction a ubiquinone + NADH + 5 H(+)(in) = a ubiquinol + NAD(+) + 4 H(+)(out). Functionally, core subunit of the mitochondrial membrane respiratory chain NADH dehydrogenase (Complex I) that is believed to belong to the minimal assembly required for catalysis. Complex I functions in the transfer of electrons from NADH to the respiratory chain. The immediate electron acceptor for the enzyme is believed to be ubiquinone. The protein is NADH-ubiquinone oxidoreductase chain 6 (ND6) of Ascaris suum (Pig roundworm).